A 332-amino-acid polypeptide reads, in one-letter code: Glycerol-3-phosphate dehydrogenase [NAD(P)+] (332 aa).

Residues Trp11, Arg30, and Lys108 each contribute to the NADPH site. Residues Lys108, Gly137, and Ser139 each coordinate sn-glycerol 3-phosphate. Position 141 (Ala141) interacts with NADPH. Sn-glycerol 3-phosphate is bound by residues Lys192, Asp245, Ser255, Arg256, and Asn257. The Proton acceptor role is filled by Lys192. Arg256 lines the NADPH pocket. 2 residues coordinate NADPH: Val280 and Glu282.

It belongs to the NAD-dependent glycerol-3-phosphate dehydrogenase family.

The protein resides in the cytoplasm. The catalysed reaction is sn-glycerol 3-phosphate + NAD(+) = dihydroxyacetone phosphate + NADH + H(+). It carries out the reaction sn-glycerol 3-phosphate + NADP(+) = dihydroxyacetone phosphate + NADPH + H(+). It participates in membrane lipid metabolism; glycerophospholipid metabolism. Its function is as follows. Catalyzes the reduction of the glycolytic intermediate dihydroxyacetone phosphate (DHAP) to sn-glycerol 3-phosphate (G3P), the key precursor for phospholipid synthesis. The protein is Glycerol-3-phosphate dehydrogenase [NAD(P)+] of Burkholderia multivorans (strain ATCC 17616 / 249).